The sequence spans 400 residues: Ribose-phosphate pyrophosphokinase 2, chloroplastic (400 aa).

Residues 1–44 (MASLALTSPPSVKIPSYLSSSSSSLFSRSSISFRTTESRSRICV) constitute a chloroplast transit peptide. Mg(2+)-binding residues include D214, H216, D225, and D229. The tract at residues 300-315 (GKVAVMVDDIIDTAGT) is binding of phosphoribosylpyrophosphate.

Belongs to the ribose-phosphate pyrophosphokinase family.

It localises to the plastid. Its subcellular location is the chloroplast. The catalysed reaction is D-ribose 5-phosphate + ATP = 5-phospho-alpha-D-ribose 1-diphosphate + AMP + H(+). The chain is Ribose-phosphate pyrophosphokinase 2, chloroplastic (PRS2) from Arabidopsis thaliana (Mouse-ear cress).